The following is an 84-amino-acid chain: Large ribosomal subunit protein eL34 (84 aa).

This sequence belongs to the eukaryotic ribosomal protein eL34 family.

The polypeptide is Large ribosomal subunit protein eL34 (Pyrobaculum calidifontis (strain DSM 21063 / JCM 11548 / VA1)).